We begin with the raw amino-acid sequence, 427 residues long: UPF0597 protein FN1147 (427 aa).

The protein belongs to the UPF0597 family.

This chain is UPF0597 protein FN1147, found in Fusobacterium nucleatum subsp. nucleatum (strain ATCC 25586 / DSM 15643 / BCRC 10681 / CIP 101130 / JCM 8532 / KCTC 2640 / LMG 13131 / VPI 4355).